Consider the following 93-residue polypeptide: MDGIKYAVFTDKGIRLLGNNQYTSNVESGSTRTEIKHWVELFFGVKVIAMNSHRLPGKGRRMGPIMGHTMHYRRMIITLQPGYSIPPLRKKRT.

Belongs to the universal ribosomal protein uL23 family. In terms of assembly, part of the 50S ribosomal subunit.

The protein resides in the plastid. Its subcellular location is the chloroplast. Its function is as follows. Binds to 23S rRNA. This Platanus occidentalis (Sycamore) protein is Large ribosomal subunit protein uL23cz/uL23cy (rpl23-A).